The chain runs to 92 residues: Large ribosomal subunit protein bL25 (92 aa).

Belongs to the bacterial ribosomal protein bL25 family. Part of the 50S ribosomal subunit; part of the 5S rRNA/L5/L18/L25 subcomplex. Contacts the 5S rRNA. Binds to the 5S rRNA independently of L5 and L18.

Its function is as follows. This is one of the proteins that binds to the 5S RNA in the ribosome where it forms part of the central protuberance. This chain is Large ribosomal subunit protein bL25, found in Aliivibrio fischeri (strain MJ11) (Vibrio fischeri).